The sequence spans 90 residues: Probable Fe(2+)-trafficking protein (90 aa).

This sequence belongs to the Fe(2+)-trafficking protein family. As to quaternary structure, monomer.

Its function is as follows. Could be a mediator in iron transactions between iron acquisition and iron-requiring processes, such as synthesis and/or repair of Fe-S clusters in biosynthetic enzymes. The sequence is that of Probable Fe(2+)-trafficking protein from Sodalis glossinidius (strain morsitans).